Here is a 203-residue protein sequence, read N- to C-terminus: IQ domain-containing protein F3 (203 aa).

Positions 1-12 are enriched in basic and acidic residues; the sequence is MELDQDKKKETP. The segment at 1-111 is disordered; the sequence is MELDQDKKKE…CETQEADRSE (111 aa). Residues 13–82 are a coiled coil; sequence EETENVNEVQ…EADKAILERS (70 aa). Acidic residues predominate over residues 29–38; that stretch reads DEETEAEAEE. Basic and acidic residues predominate over residues 39 to 51; sequence ADKAILERSDSVK. The span at 64 to 73 shows a compositional bias: acidic residues; the sequence is DEETEAEAEE. 2 stretches are compositionally biased toward basic and acidic residues: residues 74–86 and 96–111; these read ADKAILERSDSVK and QIQEEKCETQEADRSE. In terms of domain architecture, IQ spans 129 to 158; it reads VMLAGVKIQAWWRGTLVRRTLLLAALNAWT.

The protein is IQ domain-containing protein F3 (Iqcf3) of Mus musculus (Mouse).